A 286-amino-acid chain; its full sequence is DegV domain-containing protein SPs1668 (286 aa).

The DegV domain occupies 3 to 282 (FTIMTDSTAD…PNTLAVFVIG (280 aa)). Thr62 and Ser94 together coordinate hexadecanoate.

May bind long-chain fatty acids, such as palmitate, and may play a role in lipid transport or fatty acid metabolism. The polypeptide is DegV domain-containing protein SPs1668 (Streptococcus pyogenes serotype M3 (strain SSI-1)).